The following is a 283-amino-acid chain: Endochitinase At2g43620 (283 aa).

The N-terminal stretch at 1 to 28 (MATLRAMLKNAFILFLFTLTIMAKTVFS) is a signal peptide. The 38-residue stretch at 29-66 (QQCGTTGCAANLCCSRYGYCGTTDAYCGTGCRSGPCSS) folds into the Chitin-binding type-1 domain. 4 cysteine pairs are disulfide-bonded: C31–C42, C36–C48, C41–C55, and C59–C64. Residues 88–283 (DTIENVVTPA…GITPGANLSC (196 aa)) are catalytic. Catalysis depends on E150, which acts as the Proton donor. N-linked (GlcNAc...) asparagine glycosylation occurs at N280.

It belongs to the glycosyl hydrolase 19 family. Chitinase class I subfamily.

The enzyme catalyses Random endo-hydrolysis of N-acetyl-beta-D-glucosaminide (1-&gt;4)-beta-linkages in chitin and chitodextrins.. In Arabidopsis thaliana (Mouse-ear cress), this protein is Endochitinase At2g43620.